The chain runs to 79 residues: Conotoxin Leo-O1 (79 aa).

Positions 1–22 (MKLTCMMLVAVLFLTAWTFVTA) are cleaved as a signal peptide. Residues 23-51 (NVSRNGLENLFPEERHEMMNPEAAKLNNR) constitute a propeptide that is removed on maturation. 3 disulfides stabilise this stretch: C53–C70, C60–C74, and C69–C78.

This sequence belongs to the conotoxin O1 superfamily. As to expression, expressed by the venom duct.

The protein resides in the secreted. The chain is Conotoxin Leo-O1 from Conus leopardus (Leopard cone).